Reading from the N-terminus, the 133-residue chain is NADPH-dependent 7-cyano-7-deazaguanine reductase (133 aa).

The active-site Thioimide intermediate is C49. The Proton donor role is filled by D56. Substrate is bound by residues 71–73 (IEL) and 90–91 (HE).

The protein belongs to the GTP cyclohydrolase I family. QueF type 1 subfamily.

It localises to the cytoplasm. It catalyses the reaction 7-aminomethyl-7-carbaguanine + 2 NADP(+) = 7-cyano-7-deazaguanine + 2 NADPH + 3 H(+). Its pathway is tRNA modification; tRNA-queuosine biosynthesis. Catalyzes the NADPH-dependent reduction of 7-cyano-7-deazaguanine (preQ0) to 7-aminomethyl-7-deazaguanine (preQ1). This Leptospira interrogans serogroup Icterohaemorrhagiae serovar copenhageni (strain Fiocruz L1-130) protein is NADPH-dependent 7-cyano-7-deazaguanine reductase.